A 500-amino-acid chain; its full sequence is Cytochrome P450 monooxygenase acrD (500 aa).

A helical membrane pass occupies residues 13–32 (PYLSGTNLVWTLLLVGYIIP). N-linked (GlcNAc...) asparagine glycosylation is found at asparagine 210 and asparagine 414. Cysteine 447 contributes to the heme binding site.

Belongs to the cytochrome P450 family. The cofactor is heme.

Its subcellular location is the membrane. The protein operates within secondary metabolite biosynthesis. Functionally, cytochrome P450 monooxygenase; part of the cluster that mediates the biosynthesis of acurin A, a highly reduced polyketide coupled to a serine via a peptide bond. The activities of the highly reducing polyketide synthase acrA and the nonribosomal peptide synthetase acrB are collectively responsible for the synthesis of the acurin A core structure with a heptaketide backbone produced by acrA covalently fused to a L-serine by acrB. After the formation of the PK-NRP hybrid product, it is detached from acrB by reductive release to set up the formation of the lactam ring by aldol condensation. The hydrolyase acrC then catalyzes water loss to generate a double bond in the ring. This double bond is probably reduced, which is followed by three oxidations at C-22 to generate the carboxylic acid moiety, involving probably the FAD-binding monooxygenase acrE and the cytochrome P450 monooxygenases acrD and acrF. Finally, a last methylation step performed by the O-methyltransferase acrG leads to the production of acurin A. The sequence is that of Cytochrome P450 monooxygenase acrD from Aspergillus aculeatus (strain ATCC 16872 / CBS 172.66 / WB 5094).